The sequence spans 403 residues: Tryptophan synthase beta chain (403 aa).

An N6-(pyridoxal phosphate)lysine modification is found at K90.

The protein belongs to the TrpB family. In terms of assembly, tetramer of two alpha and two beta chains. Pyridoxal 5'-phosphate serves as cofactor.

The catalysed reaction is (1S,2R)-1-C-(indol-3-yl)glycerol 3-phosphate + L-serine = D-glyceraldehyde 3-phosphate + L-tryptophan + H2O. It functions in the pathway amino-acid biosynthesis; L-tryptophan biosynthesis; L-tryptophan from chorismate: step 5/5. Functionally, the beta subunit is responsible for the synthesis of L-tryptophan from indole and L-serine. The chain is Tryptophan synthase beta chain from Leifsonia xyli subsp. xyli (strain CTCB07).